The following is a 197-amino-acid chain: NADH-quinone oxidoreductase subunit I 2 (197 aa).

2 consecutive 4Fe-4S ferredoxin-type domains span residues 42–71 (GVIGLFEENCTVCMLCARECPDWCIYIDSH) and 91–120 (DRFAIDFALCMYCGICIEVCPFDALFWSPE). [4Fe-4S] cluster-binding residues include Cys51, Cys54, Cys57, Cys61, Cys100, Cys103, Cys106, and Cys110. A disordered region spans residues 147-197 (APPALDPGAEEPKELAAARKAADKLAAQQQPDQPGPDHPGQPDESGQEGRT). Residues 156–169 (EEPKELAAARKAAD) show a composition bias toward basic and acidic residues.

It belongs to the complex I 23 kDa subunit family. In terms of assembly, NDH-1 is composed of 14 different subunits. Subunits NuoA, H, J, K, L, M, N constitute the membrane sector of the complex. [4Fe-4S] cluster is required as a cofactor.

Its subcellular location is the cell membrane. It catalyses the reaction a quinone + NADH + 5 H(+)(in) = a quinol + NAD(+) + 4 H(+)(out). NDH-1 shuttles electrons from NADH, via FMN and iron-sulfur (Fe-S) centers, to quinones in the respiratory chain. The immediate electron acceptor for the enzyme in this species is believed to be ubiquinone. Couples the redox reaction to proton translocation (for every two electrons transferred, four hydrogen ions are translocated across the cytoplasmic membrane), and thus conserves the redox energy in a proton gradient. The polypeptide is NADH-quinone oxidoreductase subunit I 2 (Streptomyces coelicolor (strain ATCC BAA-471 / A3(2) / M145)).